We begin with the raw amino-acid sequence, 104 residues long: Colipase-like protein 2 (104 aa).

Positions 1–19 (MAFTQALVTVLAFLVGTLP) are cleaved as a signal peptide. 5 cysteine pairs are disulfide-bonded: Cys-38–Cys-49, Cys-44–Cys-60, Cys-48–Cys-82, Cys-70–Cys-90, and Cys-84–Cys-101.

This sequence belongs to the colipase family.

It is found in the secreted. This is Colipase-like protein 2 (Clpsl2) from Rattus norvegicus (Rat).